The sequence spans 406 residues: Argininosuccinate synthase (406 aa).

Residues 11–19 (AYSGGLDTS) and alanine 38 contribute to the ATP site. L-citrulline-binding residues include tyrosine 91 and serine 96. Glycine 121 serves as a coordination point for ATP. L-aspartate contacts are provided by threonine 123, asparagine 127, and aspartate 128. Asparagine 127 serves as a coordination point for L-citrulline. 5 residues coordinate L-citrulline: arginine 131, serine 181, serine 190, glutamate 266, and tyrosine 278.

Belongs to the argininosuccinate synthase family. Type 1 subfamily. As to quaternary structure, homotetramer.

The protein localises to the cytoplasm. It catalyses the reaction L-citrulline + L-aspartate + ATP = 2-(N(omega)-L-arginino)succinate + AMP + diphosphate + H(+). Its pathway is amino-acid biosynthesis; L-arginine biosynthesis; L-arginine from L-ornithine and carbamoyl phosphate: step 2/3. The sequence is that of Argininosuccinate synthase from Campylobacter jejuni subsp. doylei (strain ATCC BAA-1458 / RM4099 / 269.97).